The sequence spans 1165 residues: Chromosome partition protein Smc (1165 aa).

32 to 39 (PNGSGKSN) serves as a coordination point for ATP. Residues 161–503 (AGVAEFDRKI…ETQRQVWREA (343 aa)) adopt a coiled-coil conformation. In terms of domain architecture, SMC hinge spans 518 to 630 (QGVHGLISQL…VFRSLELARR (113 aa)). Coiled coils occupy residues 672-901 (ELAE…LQQR) and 946-1010 (DLSL…DCDT).

Belongs to the SMC family. In terms of assembly, homodimer.

Its subcellular location is the cytoplasm. Required for chromosome condensation and partitioning. This chain is Chromosome partition protein Smc, found in Gloeobacter violaceus (strain ATCC 29082 / PCC 7421).